The chain runs to 70 residues: Putative membrane protein insertion efficiency factor (70 aa).

The protein belongs to the UPF0161 family.

The protein resides in the cell membrane. Could be involved in insertion of integral membrane proteins into the membrane. The chain is Putative membrane protein insertion efficiency factor from Chloroflexus aurantiacus (strain ATCC 29366 / DSM 635 / J-10-fl).